Consider the following 510-residue polypeptide: MKLAYWMYAGPAHIGTLRVASSFKNVHSIMHAPLGDDYFNVMRSMLERERDFTPVTTSVVDRQVLARGSDEKVIRNIVRKDGEEQPDLIVVTPTCTSSILQEDLHHFVRQAQLASRCDVVLADVNHYRVNELQAADRTLQQIVEFYITKARKSGELDGLPQKTERPSCNILGISSLGFHNAHDLRELKALLRDLDIDLNLVIPQGASVHDLKHLGRAWFNVVPYRELGPMTARYLQQEFGMPYIEITPMGVVETARFIRQIQQILNEQGIPVDYEAYIQEQTLHISQAAWFSRSIDCQNLTGKKAVVFGDSTHAAAITKILAREMGIHVVWAGSYCTYDGEWFQAEVGEYCDQILMTEDHTRVADAIAQAEPAAIFGTQMERHVGKRLRIPCGVISAPIHVQDFPIGYRPFLGYEGANQIVDLIYNSFTLGMEDHLLEIFGGHDTKEVIHKSLSADSDLIWTREAQAELDKVPGFVRGKVKRNTEKFARERGLTEISVEVMYAAKEAFGA.

D36 provides a ligand contact to [4Fe-4S] cluster. D296 acts as the Proton donor in catalysis. Position 431–432 (431–432 (GM)) interacts with substrate.

Belongs to the ChlB/BchB/BchZ family. Protochlorophyllide reductase is composed of three subunits; ChlL, ChlN and ChlB. Forms a heterotetramer of two ChlB and two ChlN subunits. [4Fe-4S] cluster is required as a cofactor.

The enzyme catalyses chlorophyllide a + oxidized 2[4Fe-4S]-[ferredoxin] + 2 ADP + 2 phosphate = protochlorophyllide a + reduced 2[4Fe-4S]-[ferredoxin] + 2 ATP + 2 H2O. Its pathway is porphyrin-containing compound metabolism; chlorophyll biosynthesis (light-independent). Functionally, component of the dark-operative protochlorophyllide reductase (DPOR) that uses Mg-ATP and reduced ferredoxin to reduce ring D of protochlorophyllide (Pchlide) to form chlorophyllide a (Chlide). This reaction is light-independent. The NB-protein (ChlN-ChlB) is the catalytic component of the complex. The polypeptide is Light-independent protochlorophyllide reductase subunit B (Synechococcus sp. (strain JA-2-3B'a(2-13)) (Cyanobacteria bacterium Yellowstone B-Prime)).